Reading from the N-terminus, the 246-residue chain is Thaumatin-like protein 1a (246 aa).

Residues 1–24 form the signal peptide; it reads MMKSQVASLLGLTLAILFFSGAHA. Cystine bridges form between cysteine 33/cysteine 245, cysteine 81/cysteine 91, cysteine 96/cysteine 103, cysteine 151/cysteine 234, cysteine 156/cysteine 217, cysteine 164/cysteine 180, cysteine 184/cysteine 193, and cysteine 194/cysteine 204.

The protein belongs to the thaumatin family.

It localises to the secreted. The polypeptide is Thaumatin-like protein 1a (TL1) (Malus domestica (Apple)).